Consider the following 422-residue polypeptide: MNQVELLSPAGNLKKLKIALNYGADAVYGGVSHFSLRNRAGKEFTLETFKEGIDYAHALDKKVYATINGFPFNSQLKLLEEHLYKMAELEPDAFIIAAPGVIKLASKIAPHIPVHLSTQANVLNTLDAQVFYDLGVKRIVCARELSLNDAVEIKKALPDLELEIFVHGSMCFAFSGRCLISALQKGRVPNRGSCANDCRFDYEYYVKNPDNGVMMRLVEEEGVGTHIFNAKDLNLSGHIAEILSSNAISALKIEGRTKSSYYAAQTTRIYRLAVDDFYHNTLKPSFYASELNTLKNRGFTDGYLMRRPFERLDTQNHQTAISEGDFQVNGEITEDGRFFACKFTTTTNTAYEIIAPKNAAITPIVNDIGKIYTFEKRSYLVLYKILLENNTELETIHSGNVNLVRLPAPLPAFSFLRTQVRV.

The signal sequence occupies residues 1-58 (MNQVELLSPAGNLKKLKIALNYGADAVYGGVSHFSLRNRAGKEFTLETFKEGIDYAHA).

This sequence belongs to the peptidase U32 family.

In terms of biological role, involved in prephenate-dependent formation of 5-hydroxyuridine (ho5U) modification at position 34 in tRNAs, the first step in 5-carboxymethoxyuridine (cmo5U) biosynthesis. This Helicobacter pylori (strain J99 / ATCC 700824) (Campylobacter pylori J99) protein is tRNA hydroxylation protein P.